A 122-amino-acid chain; its full sequence is S-adenosylmethionine decarboxylase proenzyme (122 aa).

Ser-69 functions as the Schiff-base intermediate with substrate; via pyruvic acid in the catalytic mechanism. Ser-69 is subject to Pyruvic acid (Ser); by autocatalysis. His-74 (proton acceptor; for processing activity) is an active-site residue. The Proton donor; for catalytic activity role is filled by Cys-89.

This sequence belongs to the prokaryotic AdoMetDC family. Type 1 subfamily. Heterotetramer of two alpha and two beta chains arranged as a dimer of alpha/beta heterodimers. The cofactor is pyruvate. Post-translationally, is synthesized initially as an inactive proenzyme. Formation of the active enzyme involves a self-maturation process in which the active site pyruvoyl group is generated from an internal serine residue via an autocatalytic post-translational modification. Two non-identical subunits are generated from the proenzyme in this reaction, and the pyruvate is formed at the N-terminus of the alpha chain, which is derived from the carboxyl end of the proenzyme. The post-translation cleavage follows an unusual pathway, termed non-hydrolytic serinolysis, in which the side chain hydroxyl group of the serine supplies its oxygen atom to form the C-terminus of the beta chain, while the remainder of the serine residue undergoes an oxidative deamination to produce ammonia and the pyruvoyl group blocking the N-terminus of the alpha chain.

The catalysed reaction is S-adenosyl-L-methionine + H(+) = S-adenosyl 3-(methylsulfanyl)propylamine + CO2. It participates in amine and polyamine biosynthesis; S-adenosylmethioninamine biosynthesis; S-adenosylmethioninamine from S-adenosyl-L-methionine: step 1/1. Catalyzes the decarboxylation of S-adenosylmethionine to S-adenosylmethioninamine (dcAdoMet), the propylamine donor required for the synthesis of the polyamines spermine and spermidine from the diamine putrescine. The sequence is that of S-adenosylmethionine decarboxylase proenzyme from Sulfolobus acidocaldarius (strain ATCC 33909 / DSM 639 / JCM 8929 / NBRC 15157 / NCIMB 11770).